The chain runs to 84 residues: Large ribosomal subunit protein bL27 (84 aa).

The disordered stretch occupies residues 1–20 (MAHKKAGGSTRNGRDSHSKR).

It belongs to the bacterial ribosomal protein bL27 family.

The polypeptide is Large ribosomal subunit protein bL27 (Blochmanniella pennsylvanica (strain BPEN)).